The following is a 293-amino-acid chain: Large ribosomal subunit protein uL4c (293 aa).

The N-terminal 50 residues, 1–50 (MATSTSSSLSLSFFSSSLFSSKSRNFSSKPILKLPSSSHSQTSLSLSIKS), are a transit peptide targeting the chloroplast. Disordered regions lie at residues 107–138 (EVRG…PGGG) and 259–293 (YGVD…EPAE). Residues 116 to 126 (YPQKKTGRARR) show a composition bias toward basic residues. Residues 263–293 (TLEDEDEEEEEEEEGEEVDDGVEDGTPEPAE) are compositionally biased toward acidic residues.

The protein belongs to the universal ribosomal protein uL4 family. Component of the chloroplast large ribosomal subunit (LSU). Mature 70S chloroplast ribosomes of higher plants consist of a small (30S) and a large (50S) subunit. The 30S small subunit contains 1 molecule of ribosomal RNA (16S rRNA) and 24 different proteins. The 50S large subunit contains 3 rRNA molecules (23S, 5S and 4.5S rRNA) and 33 different proteins. As to expression, highly expressed in cotyledon and weakly in roots.

The protein resides in the plastid. It localises to the chloroplast. Functionally, component of the chloroplast ribosome (chloro-ribosome), a dedicated translation machinery responsible for the synthesis of chloroplast genome-encoded proteins, including proteins of the transcription and translation machinery and components of the photosynthetic apparatus. This chain is Large ribosomal subunit protein uL4c (RPL4), found in Spinacia oleracea (Spinach).